Consider the following 229-residue polypeptide: Potassium/proton antiporter CemA (229 aa).

Helical transmembrane passes span 7–27 (FTPL…SLSL), 114–134 (IICF…LLIL), 154–174 (ILLL…ELMI), and 189–209 (IISG…KYWI).

It belongs to the CemA family.

The protein localises to the plastid. The protein resides in the chloroplast inner membrane. The catalysed reaction is K(+)(in) + H(+)(out) = K(+)(out) + H(+)(in). Its function is as follows. Contributes to K(+)/H(+) antiport activity by supporting proton efflux to control proton extrusion and homeostasis in chloroplasts in a light-dependent manner to modulate photosynthesis. Prevents excessive induction of non-photochemical quenching (NPQ) under continuous-light conditions. Indirectly promotes efficient inorganic carbon uptake into chloroplasts. The sequence is that of Potassium/proton antiporter CemA from Vitis vinifera (Grape).